The sequence spans 446 residues: SPARC-related modular calcium-binding protein 2 (446 aa).

The N-terminal stretch at 1–21 is a signal peptide; the sequence is MLLPQLCWLPLLAGLLPPVPA. In terms of domain architecture, Kazal-like spans 34-86; the sequence is QDKDKDCSLDCAGSPQKPLCASDGRTFLSRCEFQRAKCKDPQLEIAYRGNCKD. Intrachain disulfides connect Cys-40–Cys-71, Cys-44–Cys-64, Cys-53–Cys-84, Cys-90–Cys-113, Cys-124–Cys-131, and Cys-133–Cys-153. In terms of domain architecture, Thyroglobulin type-1 1 spans 87-153; the sequence is VSRCVAERKY…TAVAHKTPRC (67 aa). A disordered region spans residues 147–228; the sequence is AHKTPRCPGS…EHQSALEEAK (82 aa). The span at 161-172 shows a compositional bias: basic and acidic residues; sequence LPQREGTGKTDD. N-linked (GlcNAc...) asparagine glycosylation is present at Asn-206. A compositionally biased stretch (polar residues) spans 206-216; that stretch reads NKTNKNSVSSC. Residues 213–281 form the Thyroglobulin type-1 2 domain; sequence VSSCDQEHQS…TSTRYEQPKC (69 aa). 3 disulfides stabilise this stretch: Cys-216/Cys-240, Cys-251/Cys-258, and Cys-260/Cys-281. Positions 217–228 are enriched in basic and acidic residues; that stretch reads DQEHQSALEEAK. EF-hand domains follow at residues 347–382 and 384–419; these read LEER…LRKK and KPKK…AKED. Asp-360, Asn-362, Ser-364, Asp-366, Glu-371, Asp-397, Asn-399, Asp-401, Ser-403, and Glu-408 together coordinate Ca(2+). Asn-362 carries an N-linked (GlcNAc...) asparagine glycan. A disordered region spans residues 416–446; sequence AKEDGKADTKKRHTPRGHAESTSNRQPRKQG.

As to quaternary structure, binds various proteins from the extracellular matrix.

The protein resides in the secreted. It localises to the extracellular space. Its subcellular location is the extracellular matrix. It is found in the basement membrane. Its function is as follows. Promotes matrix assembly and cell adhesiveness. Can stimulate endothelial cell proliferation, migration, as well as angiogenesis. The sequence is that of SPARC-related modular calcium-binding protein 2 (SMOC2) from Homo sapiens (Human).